Reading from the N-terminus, the 317-residue chain is Sperm acrosome membrane-associated protein 6 (317 aa).

Positions 1–18 (MFVFIAKLLIFSSVITSA) are cleaved as a signal peptide. Residues 19–281 (FTCYQCFIDE…PSFSFWLPRP (263 aa)) lie on the Extracellular side of the membrane. Cystine bridges form between Cys-21–Cys-143, Cys-24–Cys-146, Cys-35–Cys-51, Cys-128–Cys-151, and Cys-132–Cys-157. The N-linked (GlcNAc...) asparagine glycan is linked to Asn-29. The region spanning 123 to 237 (PRVSGCLPPC…EVLSQEQSLV (115 aa)) is the Ig-like domain. Asn-168 carries N-linked (GlcNAc...) asparagine glycosylation. Cys-174 and Cys-227 form a disulfide bridge. A helical transmembrane segment spans residues 282–302 (ALLITCLTATMLLIFLSLGAM). Topologically, residues 303-317 (CRLWYQIRTNVSNPA) are cytoplasmic.

Belongs to the SPACA6 family. In terms of assembly, forms a complex with izumo1 and tmem81 on spermatocyte cell membrane. The complex binds to oocyte protein bncr. In terms of tissue distribution, expressed in testis.

It is found in the cytoplasmic vesicle. Its subcellular location is the secretory vesicle. The protein resides in the acrosome membrane. Functionally, sperm protein required for fusion of sperm with the egg membrane during fertilization. May regulate the expression of sperm surface protein DCST2. This Danio rerio (Zebrafish) protein is Sperm acrosome membrane-associated protein 6.